The following is a 372-amino-acid chain: NAD(P)H-quinone oxidoreductase subunit 1 (372 aa).

The next 8 membrane-spanning stretches (helical) occupy residues 27–47, 97–117, 128–148, 176–196, 204–224, 266–286, 308–328, and 347–367; these read IIWL…GVLV, ILFT…WLIV, VGIG…GLLM, LALS…IDIV, ILSW…ICAL, ILSA…PIPV, SIGI…AILL, and FLLP…LAFP.

This sequence belongs to the complex I subunit 1 family. As to quaternary structure, NDH-1 is composed of at least 11 different subunits.

It is found in the cellular thylakoid membrane. The enzyme catalyses a plastoquinone + NADH + (n+1) H(+)(in) = a plastoquinol + NAD(+) + n H(+)(out). It carries out the reaction a plastoquinone + NADPH + (n+1) H(+)(in) = a plastoquinol + NADP(+) + n H(+)(out). In terms of biological role, NDH-1 shuttles electrons from an unknown electron donor, via FMN and iron-sulfur (Fe-S) centers, to quinones in the respiratory and/or the photosynthetic chain. The immediate electron acceptor for the enzyme in this species is believed to be plastoquinone. Couples the redox reaction to proton translocation, and thus conserves the redox energy in a proton gradient. This chain is NAD(P)H-quinone oxidoreductase subunit 1, found in Prochlorococcus marinus subsp. pastoris (strain CCMP1986 / NIES-2087 / MED4).